We begin with the raw amino-acid sequence, 306 residues long: MNVAVQSRVDRETIGVARKTKAYVALTKPRVIELLLVTTAPVMILAQGGWPNPWLILGVLVGGTLSAGSANAFNCYIDRDIDRVMKRTQRRPLVTGELTDREALVFAWIIGVASIVWLGVISNWLAAALSLAAILFYVFVYTLWLKRRTPQNIVWGGAAGCMPVLIGWAAVTGDISWAPVILFMIVFLWTPPHYWPLSMKYRDDYASVNVPMLAVVRGRAAVGLQTILYAWATLACSLLLIPVAGMGLVYTLAALAGGGWFVYETHRLYDLAVRHEPIKPMRVFHASISYLSLLFLAVGIDPLLPF.

The next 8 membrane-spanning stretches (helical) occupy residues 31–50 (VIELLLVTTAPVMILAQGGW), 55–77 (LILGVLVGGTLSAGSANAFNCYI), 104–124 (LVFAWIIGVASIVWLGVISNW), 125–145 (LAAALSLAAILFYVFVYTLWL), 168–188 (WAAVTGDISWAPVILFMIVFL), 218–235 (GRAAVGLQTILYAWATLA), 238–258 (LLLIPVAGMGLVYTLAALAGG), and 286–306 (ASISYLSLLFLAVGIDPLLPF).

Belongs to the UbiA prenyltransferase family. Protoheme IX farnesyltransferase subfamily.

The protein resides in the cell membrane. It carries out the reaction heme b + (2E,6E)-farnesyl diphosphate + H2O = Fe(II)-heme o + diphosphate. It functions in the pathway porphyrin-containing compound metabolism; heme O biosynthesis; heme O from protoheme: step 1/1. Converts heme B (protoheme IX) to heme O by substitution of the vinyl group on carbon 2 of heme B porphyrin ring with a hydroxyethyl farnesyl side group. In Clavibacter michiganensis subsp. michiganensis (strain NCPPB 382), this protein is Protoheme IX farnesyltransferase.